A 469-amino-acid chain; its full sequence is Soluble pyridine nucleotide transhydrogenase (469 aa).

Position 39–48 (39–48 (ERENSVGGGC)) interacts with FAD.

It belongs to the class-I pyridine nucleotide-disulfide oxidoreductase family. FAD is required as a cofactor.

Its subcellular location is the cytoplasm. It carries out the reaction NAD(+) + NADPH = NADH + NADP(+). Functionally, conversion of NADPH, generated by peripheral catabolic pathways, to NADH, which can enter the respiratory chain for energy generation. The protein is Soluble pyridine nucleotide transhydrogenase of Photobacterium profundum (strain SS9).